The following is a 115-amino-acid chain: Galanin-like peptide (115 aa).

An N-terminal signal peptide occupies residues 1 to 23 (MAPSVPLVLLLVLLLSLAETPAS). Residues 86-115 (NVMEAFAKPEIGDLDVLSKKIPKEEDVLKS) constitute a propeptide that is removed on maturation.

It belongs to the galanin family. In terms of tissue distribution, hypothalamus and pituitary gland.

The protein localises to the secreted. Hypothalamic neuropeptide which binds to the G-protein-coupled galanin receptors (GALR1, GALR2 and GALR3). Involved in a large number of putative physiological functions in CNS homeostatic processes, including the regulation of gonadotropin-releasing hormone secretion. Functionally, exhibits potent and dose-dependent vasoconstrictor and anti-edema activity in the cutaneous microvasculature, a physiologic effects which does not appear to be mediated via GALR1 or GALR2. Exhibits antimicrobial activity against Gram-negative bacterias, inducing bacterial membrane blebbing. This Macaca nemestrina (Pig-tailed macaque) protein is Galanin-like peptide (GALP).